The following is a 303-amino-acid chain: Glycine--tRNA ligase alpha subunit (303 aa).

Belongs to the class-II aminoacyl-tRNA synthetase family. Tetramer of two alpha and two beta subunits.

It is found in the cytoplasm. It carries out the reaction tRNA(Gly) + glycine + ATP = glycyl-tRNA(Gly) + AMP + diphosphate. This Stenotrophomonas maltophilia (strain R551-3) protein is Glycine--tRNA ligase alpha subunit.